A 520-amino-acid polypeptide reads, in one-letter code: O-methyltransferase cicE (520 aa).

S-adenosyl-L-methionine contacts are provided by residues 300-301 (GG), Asp323, 355-356 (NF), and Arg371.

It belongs to the class I-like SAM-binding methyltransferase superfamily. Cation-independent O-methyltransferase family.

It participates in phytotoxin biosynthesis. Its function is as follows. O-methyltransferase; part of the gene cluster that mediates the biosynthesis of cichorine, a phytotoxin active against knapweed, corn, and soybeans. The first step in the pathway is performed by the non-reducing polyketide synthase pkbA that condenses one acetyl-CoA starter unit with 3 malonyl-CoA units. PkbA also catalyzes one methylation step to produce 3-methylorsellinate. The nonribosomal peptide synthase-like protein cicB, the cytochrome P450 monooxygenase cicH and the O-methyltransferase cicE are involved in the conversion of 3-methylorsellinate into nidulol. CicB converts 3-methylorsellinate to a yet unidentified intermediate, cicH may play a ring-closing role for cichorine and cicE is plausibly responsible for the methylation of one of the phenol groups. The oxidoreductase cicC acts downstream with still unidentified enzymes to further convert nidulol into cichorine. The polypeptide is O-methyltransferase cicE (Emericella nidulans (strain FGSC A4 / ATCC 38163 / CBS 112.46 / NRRL 194 / M139) (Aspergillus nidulans)).